The chain runs to 215 residues: MGKGDPKKPRGKMSSYAFFVQTCREEHKKKHPDASVNFSEFSKKCSERWKTMSSKEKGKFEDMAKADKLRYEKEMKNYVPPKGETKKKFKDPNAPKRPPSAFFLFCSEFRPKIKGEHPGLSIGDVAKKLGEMWNNTAADDKQPYEKKAAKLKEKYEKDIAAYRAKGKVDAGKKVVAKAEKSKKKKEEEEDEDEDEEDEEDEEEEEEEEEDDDDDE.

The HMG box 1 DNA-binding region spans 9-79 (PRGKMSSYAF…RYEKEMKNYV (71 aa)). C23 is modified (cysteine sulfonic acid (-SO3H); alternate). Cysteines 23 and 45 form a disulfide. Positions 27–43 (HKKKHPDASVNFSEFSK) are NLS 1. The Nuclear localization signal (NLS) 1 signature appears at 27–43 (HKKKHPDASVNFSEFSK). C45 bears the Cysteine sulfonic acid (-SO3H); alternate mark. Residues 75-95 (MKNYVPPKGETKKKFKDPNAP) form a disordered region. The segment covering 83–94 (GETKKKFKDPNA) has biased composition (basic and acidic residues). The segment at residues 95–163 (PKRPPSAFFL…KYEKDIAAYR (69 aa)) is a DNA-binding region (HMG box 2). Position 106 is a cysteine sulfonic acid (-SO3H) (C106). Positions 166-179 (GKVDAGKKVVAKAE) are enriched in basic and acidic residues. The tract at residues 166–215 (GKVDAGKKVVAKAEKSKKKKEEEEDEDEDEEDEEDEEEEEEEEEDDDDDE) is disordered. The interval 178 to 184 (AEKSKKK) is NLS 2. A Nuclear localization signal (NLS) 2 motif is present at residues 178 to 184 (AEKSKKK). The segment covering 187–215 (EEEDEDEDEEDEEDEEEEEEEEEDDDDDE) has biased composition (acidic residues). The interval 196–210 (EDEEDEEEEEEEEED) is involved in intramolecular interaction with K-3. Residues 211-215 (DDDDE) are involved in interaction with histone H3.

Belongs to the HMGB family. Post-translationally, reduction/oxidation of cysteine residues Cys-23, Cys-45 and Cys-106 and a possible intramolecular disulfide bond involving Cys-23 and Cys-45 give rise to different redox forms with specific functional activities: 1- fully reduced HMGB1 (HMGB1C23hC45hC106h), 2- disulfide HMGB1 (HMGB1C23-C45C106h) and 3- sulfonyl HMGB1 (HMGB1C23soC45soC106so).

The protein resides in the nucleus. The protein localises to the chromosome. It is found in the cytoplasm. Its subcellular location is the secreted. Functionally, multifunctional redox sensitive protein with various roles in different cellular compartments. Nuclear functions are attributed to fully reduced HGMB1. Associates with chromatin and binds DNA with a preference to non-canonical DNA structures such as single-stranded DNA, DNA-containing cruciforms or bent structures, supercoiled DNA and ZDNA. Can bent DNA and enhance DNA flexibility by looping thus providing a mechanism to promote activities on various gene promoters. Can restructure the canonical nucleosome. Proposed to be an universal biosensor for nucleic acids. May promote inflammatory response to sterile and infectious signals and may be involved in the coordination and integration of innate and adaptive immune responses. In the cytoplasm may function as sensor and/or chaperone for immunogenic nucleic acids, and mediate autophagy. May act as danger associated molecular pattern (DAMP) molecule that amplifies immune responses during tissue injury. The chain is High mobility group protein B1 (HMGB1) from Gallus gallus (Chicken).